The primary structure comprises 141 residues: Nucleoside triphosphatase NudI (141 aa).

Residues 1-141 (MRQRTIVCPL…RKTLSLKGLL (141 aa)) form the Nudix hydrolase domain. A Nudix box motif is present at residues 38–59 (GGVEPGERIEDALRREIREELG).

The protein belongs to the Nudix hydrolase family. NudI subfamily. In terms of assembly, monomer. Mg(2+) is required as a cofactor.

The catalysed reaction is a ribonucleoside 5'-triphosphate + H2O = a ribonucleoside 5'-phosphate + diphosphate + H(+). It catalyses the reaction a 2'-deoxyribonucleoside 5'-triphosphate + H2O = a 2'-deoxyribonucleoside 5'-phosphate + diphosphate + H(+). The enzyme catalyses dUTP + H2O = dUMP + diphosphate + H(+). It carries out the reaction dTTP + H2O = dTMP + diphosphate + H(+). The catalysed reaction is dCTP + H2O = dCMP + diphosphate + H(+). In terms of biological role, catalyzes the hydrolysis of nucleoside triphosphates, with a preference for pyrimidine deoxynucleoside triphosphates (dUTP, dTTP and dCTP). The polypeptide is Nucleoside triphosphatase NudI (Escherichia fergusonii (strain ATCC 35469 / DSM 13698 / CCUG 18766 / IAM 14443 / JCM 21226 / LMG 7866 / NBRC 102419 / NCTC 12128 / CDC 0568-73)).